The chain runs to 110 residues: Large ribosomal subunit protein uL22 (110 aa).

It belongs to the universal ribosomal protein uL22 family. As to quaternary structure, part of the 50S ribosomal subunit.

This protein binds specifically to 23S rRNA; its binding is stimulated by other ribosomal proteins, e.g. L4, L17, and L20. It is important during the early stages of 50S assembly. It makes multiple contacts with different domains of the 23S rRNA in the assembled 50S subunit and ribosome. Functionally, the globular domain of the protein is located near the polypeptide exit tunnel on the outside of the subunit, while an extended beta-hairpin is found that lines the wall of the exit tunnel in the center of the 70S ribosome. The protein is Large ribosomal subunit protein uL22 of Stutzerimonas stutzeri (strain A1501) (Pseudomonas stutzeri).